The primary structure comprises 215 residues: UPF0502 protein Shal_1801 (215 aa).

It belongs to the UPF0502 family.

This Shewanella halifaxensis (strain HAW-EB4) protein is UPF0502 protein Shal_1801.